A 358-amino-acid chain; its full sequence is Peptide chain release factor 1 (358 aa).

Residue Q235 is modified to N5-methylglutamine.

The protein belongs to the prokaryotic/mitochondrial release factor family. Methylated by PrmC. Methylation increases the termination efficiency of RF1.

The protein resides in the cytoplasm. Functionally, peptide chain release factor 1 directs the termination of translation in response to the peptide chain termination codons UAG and UAA. This Neisseria meningitidis serogroup B (strain ATCC BAA-335 / MC58) protein is Peptide chain release factor 1.